We begin with the raw amino-acid sequence, 363 residues long: MLLAYTVRPSNWSFTRRAYSATARAFNQQKGLLPLPIKETVDMAYDLHLPERSVIGKMPYHSPEPIIFYHGLLGSKRNYRHDCKKLATALQTPVYTVDIRNHGSSEHALPFDYNTLVNDLVHFAETHSLGKVNLVGYSLGAKVAMLACLKHPERFSAACIIDNSPEEQPHIKPLLTALVKSCVKLLDHHNVRADDKLWRHKASEALKKYIPDAGIRYYLLSNIINNPRVVEYRSPVINYDDGMLHFKNPVRHMMDFVTKEVAAWPTQELEGKQFLGPVNFIKATRSDFINPKSLQAINQYFPYHNIDEINATHFILNERPQEYLRAVTDFFKVTRYQLEKKREQDLAKIDQLNASESLKSARD.

A mitochondrion-targeting transit peptide spans Met1–Tyr19. Positions Pro65–Ser164 constitute an AB hydrolase-1 domain. Active-site charge relay system residues include Ser138, Asp162, and His313.

The protein belongs to the AB hydrolase superfamily.

The protein localises to the mitochondrion. It catalyses the reaction ethanol + acetyl-CoA = ethyl acetate + CoA. It carries out the reaction acetyl-CoA + H2O = acetate + CoA + H(+). The catalysed reaction is ethyl acetate + H2O = ethanol + acetate + H(+). In terms of biological role, alcohol acetyltransferase that catalyzes the synthesis of ethyl acetate from ethanol and acetyl-CoA. Can also function as a thioesterase by hydrolyzing acetyl-CoA in the absence of ethanol, as well as esterase hydrolyzing ethyl acetate. The protein is Ethanol acetyltransferase 1 (EAT1) of Kluyveromyces marxianus (strain DMKU3-1042 / BCC 29191 / NBRC 104275) (Yeast).